Consider the following 376-residue polypeptide: MYMRKIIHIDMDAFFASIEQRDRPELRKKPLIVGGLPRGRGVVATCCYEARRYGIHSAMSANRAYKLCPHAVFVKPRMVLYKEVSLQIMAIFREYTKKVEPLSLDEAFLDVTEYLQINGSATLLAREICALIKLRTDLSASAGVSYNKFLAKIASDLKKPGGISTVPPEEARQFIDRLSIGKFYGVGKITKSKMQSLGIQTGKDLRQYSKDFLMKRFGKAGSFFFYNARGLDERPVCPYQNRKSIGKETTLVQDTNRPEEIRDILINLSSLLGKALENNSQLAQTLTLKIRYSDFTTTTRSLSLQKPFSCPADIEECLPSLLTNCNLTHKPIRLLGISLSKLTYIGSAPRPIPLPFPKDRRSNCLNRFFAIKEESP.

A UmuC domain is found at 6 to 187 (IIHIDMDAFF…LSIGKFYGVG (182 aa)). Residues Asp-10 and Asp-105 each contribute to the Mg(2+) site. The active site involves Glu-106.

It belongs to the DNA polymerase type-Y family. In terms of assembly, monomer. The cofactor is Mg(2+).

The protein resides in the cytoplasm. The enzyme catalyses DNA(n) + a 2'-deoxyribonucleoside 5'-triphosphate = DNA(n+1) + diphosphate. In terms of biological role, poorly processive, error-prone DNA polymerase involved in untargeted mutagenesis. Copies undamaged DNA at stalled replication forks, which arise in vivo from mismatched or misaligned primer ends. These misaligned primers can be extended by PolIV. Exhibits no 3'-5' exonuclease (proofreading) activity. May be involved in translesional synthesis, in conjunction with the beta clamp from PolIII. This is DNA polymerase IV from Desulfotalea psychrophila (strain LSv54 / DSM 12343).